The sequence spans 562 residues: MRSDEVKKGWHRAPHRSLFRATGLKDEDFEKPFIGVANSFIEIIPGHFFLNKYAEIVKDEIRKNGCVPFEFNTIGVDDGIAMGHDGMLYSLPSREIIANSIETVMNAHKLDALICIPNCDKITPGMVMGALRVNVPSIFVTGGPMRAGHMPDGTPIDLATVFEGVGKFEKGEIDEETLYNLECLACPGGGSCSGMFTANSMNTLIEAMGIALKGNGTVLALTPEREELLRAAARRICEIAKDEQLTEQYRIKNIINEKAIHNAFVVDMAMGGSSNTVLHMMAIAKEADVDFDLHKLNEIARHTSHIAKISPSLQTVHMEDIHRAGGMSAVMKEISRRSDTILYLDNPVIEGGTVADRIKDAEVKDPEVIHPIENPYSKVGGLAILFGNLAEEGCVIKTAGITGERKFRGKAVCFNSQQEAIEGITSGKIKKGDVVVIRYEGPKGGPGMQEMLAPTSLIMGMGLGSDVALITDGRFSGATRGLSIGHVSPEAAEGGMIGLLKDGDIIEIDVDNFSINVDLTPEEIEKRKKEFTPIKKEVPGKWLKQYRMLVTNASNGAVLRAE.

Mg(2+) is bound at residue aspartate 78. Cysteine 119 contacts [2Fe-2S] cluster. Aspartate 120 and lysine 121 together coordinate Mg(2+). Lysine 121 carries the post-translational modification N6-carboxylysine. Cysteine 192 contacts [2Fe-2S] cluster. Residue glutamate 450 coordinates Mg(2+). Serine 476 acts as the Proton acceptor in catalysis.

The protein belongs to the IlvD/Edd family. As to quaternary structure, homodimer. [2Fe-2S] cluster serves as cofactor. Requires Mg(2+) as cofactor.

It carries out the reaction (2R)-2,3-dihydroxy-3-methylbutanoate = 3-methyl-2-oxobutanoate + H2O. The catalysed reaction is (2R,3R)-2,3-dihydroxy-3-methylpentanoate = (S)-3-methyl-2-oxopentanoate + H2O. Its pathway is amino-acid biosynthesis; L-isoleucine biosynthesis; L-isoleucine from 2-oxobutanoate: step 3/4. It functions in the pathway amino-acid biosynthesis; L-valine biosynthesis; L-valine from pyruvate: step 3/4. Functionally, functions in the biosynthesis of branched-chain amino acids. Catalyzes the dehydration of (2R,3R)-2,3-dihydroxy-3-methylpentanoate (2,3-dihydroxy-3-methylvalerate) into 2-oxo-3-methylpentanoate (2-oxo-3-methylvalerate) and of (2R)-2,3-dihydroxy-3-methylbutanoate (2,3-dihydroxyisovalerate) into 2-oxo-3-methylbutanoate (2-oxoisovalerate), the penultimate precursor to L-isoleucine and L-valine, respectively. The sequence is that of Dihydroxy-acid dehydratase from Nautilia profundicola (strain ATCC BAA-1463 / DSM 18972 / AmH).